The chain runs to 222 residues: Uracil-DNA glycosylase (222 aa).

Aspartate 61 serves as the catalytic Proton acceptor.

Belongs to the uracil-DNA glycosylase (UDG) superfamily. UNG family.

Its subcellular location is the cytoplasm. It catalyses the reaction Hydrolyzes single-stranded DNA or mismatched double-stranded DNA and polynucleotides, releasing free uracil.. In terms of biological role, excises uracil residues from the DNA which can arise as a result of misincorporation of dUMP residues by DNA polymerase or due to deamination of cytosine. This chain is Uracil-DNA glycosylase, found in Actinobacillus succinogenes (strain ATCC 55618 / DSM 22257 / CCUG 43843 / 130Z).